Here is a 66-residue protein sequence, read N- to C-terminus: Large ribosomal subunit protein uL29 (66 aa).

It belongs to the universal ribosomal protein uL29 family.

The protein is Large ribosomal subunit protein uL29 of Thermosipho melanesiensis (strain DSM 12029 / CIP 104789 / BI429).